The sequence spans 282 residues: Acetyl-coenzyme A carboxylase carboxyl transferase subunit beta (282 aa).

One can recognise a CoA carboxyltransferase N-terminal domain in the interval 25-282; it reads LWTKCVSCGE…SSILTMLYRP (258 aa). The Zn(2+) site is built by C29, C32, C48, and C51. Residues 29 to 51 form a C4-type zinc finger; it reads CVSCGETIYTKDIENNLNVCPKC.

It belongs to the AccD/PCCB family. In terms of assembly, acetyl-CoA carboxylase is a heterohexamer composed of biotin carboxyl carrier protein (AccB), biotin carboxylase (AccC) and two subunits each of ACCase subunit alpha (AccA) and ACCase subunit beta (AccD). The cofactor is Zn(2+).

The protein localises to the cytoplasm. The catalysed reaction is N(6)-carboxybiotinyl-L-lysyl-[protein] + acetyl-CoA = N(6)-biotinyl-L-lysyl-[protein] + malonyl-CoA. Its pathway is lipid metabolism; malonyl-CoA biosynthesis; malonyl-CoA from acetyl-CoA: step 1/1. Its function is as follows. Component of the acetyl coenzyme A carboxylase (ACC) complex. Biotin carboxylase (BC) catalyzes the carboxylation of biotin on its carrier protein (BCCP) and then the CO(2) group is transferred by the transcarboxylase to acetyl-CoA to form malonyl-CoA. The polypeptide is Acetyl-coenzyme A carboxylase carboxyl transferase subunit beta (Citrifermentans bemidjiense (strain ATCC BAA-1014 / DSM 16622 / JCM 12645 / Bem) (Geobacter bemidjiensis)).